The chain runs to 276 residues: B3 domain-containing protein REM22 (276 aa).

A DNA-binding region (TF-B3) is located at residues S11–G115. The segment at G141 to K164 is disordered. The span at E144–R154 shows a compositional bias: basic and acidic residues.

The protein localises to the nucleus. The polypeptide is B3 domain-containing protein REM22 (REM22) (Arabidopsis thaliana (Mouse-ear cress)).